We begin with the raw amino-acid sequence, 1437 residues long: DNA polymerase III PolC-type (1437 aa).

An Exonuclease domain is found at 420-576; sequence YVIFDVETTG…YDSETTGHLC (157 aa).

This sequence belongs to the DNA polymerase type-C family. PolC subfamily.

Its subcellular location is the cytoplasm. The enzyme catalyses DNA(n) + a 2'-deoxyribonucleoside 5'-triphosphate = DNA(n+1) + diphosphate. Its function is as follows. Required for replicative DNA synthesis. This DNA polymerase also exhibits 3' to 5' exonuclease activity. The protein is DNA polymerase III PolC-type of Pediococcus pentosaceus (strain ATCC 25745 / CCUG 21536 / LMG 10740 / 183-1w).